The sequence spans 199 residues: Transgelin-2 (199 aa).

Alanine 2 is subject to N-acetylalanine. Phosphoserine is present on serine 11. 2 positions are modified to N6-acetyllysine: lysine 17 and lysine 20. The 113-residue stretch at 24–136 folds into the Calponin-homology (CH) domain; sequence ADLEQILIQW…RTLMNLGGLA (113 aa). Serine 163 bears the Phosphoserine mark. Lysine 171 is covalently cross-linked (Glycyl lysine isopeptide (Lys-Gly) (interchain with G-Cter in SUMO2)). A Calponin-like repeat occupies 174-199; that stretch reads IGLQMGTNRGASQAGMTGYGMPRQIL. Position 180 is a phosphothreonine (threonine 180). Omega-N-methylarginine occurs at positions 182 and 196.

This sequence belongs to the calponin family.

The chain is Transgelin-2 (Tagln2) from Mus musculus (Mouse).